The sequence spans 344 residues: Arginine N-succinyltransferase (344 aa).

Residue Leu125 participates in succinyl-CoA binding. The Proton donor role is filled by His229.

The protein belongs to the arginine N-succinyltransferase family.

It carries out the reaction succinyl-CoA + L-arginine = N(2)-succinyl-L-arginine + CoA + H(+). It functions in the pathway amino-acid degradation; L-arginine degradation via AST pathway; L-glutamate and succinate from L-arginine: step 1/5. Its function is as follows. Catalyzes the transfer of succinyl-CoA to arginine to produce N(2)-succinylarginine. This Shigella flexneri serotype 5b (strain 8401) protein is Arginine N-succinyltransferase.